The chain runs to 577 residues: Pyruvate decarboxylase (577 aa).

The substrate site is built by D30 and H116. Residues 388–482 form a thiamine pyrophosphate binding region; sequence TPGYGVNDFI…FLINNDGYTI (95 aa). Mg(2+) contacts are provided by D450, N477, and G479. E483 serves as a coordination point for substrate.

This sequence belongs to the TPP enzyme family. Homotetramer. The cofactor is a metal cation. Requires thiamine diphosphate as cofactor.

The enzyme catalyses a 2-oxocarboxylate + H(+) = an aldehyde + CO2. The chain is Pyruvate decarboxylase (pdcA) from Aspergillus parasiticus.